The sequence spans 232 residues: Ashwin (232 aa).

S112, S182, S184, S189, and S193 each carry phosphoserine. The segment at 163-232 (KMEHNNNDTQ…KRKIQHVTWP (70 aa)) is disordered. A phosphothreonine mark is found at T197 and T198. Positions 206–224 (APKEEAEATNHLKPPEVKR) are enriched in basic and acidic residues.

Belongs to the ashwin family. In terms of assembly, component of the tRNA-splicing ligase complex.

The protein resides in the nucleus. The sequence is that of Ashwin from Mus musculus (Mouse).